Here is a 317-residue protein sequence, read N- to C-terminus: Sperm acrosome membrane-associated protein 6 (317 aa).

The signal sequence occupies residues 1 to 18 (MFVFIAKLLIFSSVITSA). Residues 19 to 281 (FTCYQCFIDE…PSFSFWLPRP (263 aa)) are Extracellular-facing. Intrachain disulfides connect Cys-21–Cys-143, Cys-24–Cys-146, Cys-35–Cys-51, Cys-128–Cys-151, and Cys-132–Cys-157. Asn-29 carries N-linked (GlcNAc...) asparagine glycosylation. Residues 123–237 (PRVSGCLPPC…EVLSQEQSLV (115 aa)) enclose the Ig-like domain. The N-linked (GlcNAc...) asparagine glycan is linked to Asn-168. A disulfide bridge links Cys-174 with Cys-227. The helical transmembrane segment at 282-302 (ALLITCLTATMLLIFLSLGAM) threads the bilayer. Residues 303–317 (CRLWYQIRTNVSNPA) lie on the Cytoplasmic side of the membrane.

This sequence belongs to the SPACA6 family. In terms of assembly, forms a complex with izumo1 and tmem81 on spermatocyte cell membrane. The complex binds to oocyte protein bncr. As to expression, expressed in testis.

The protein resides in the cytoplasmic vesicle. It localises to the secretory vesicle. It is found in the acrosome membrane. In terms of biological role, sperm protein required for fusion of sperm with the egg membrane during fertilization. May regulate the expression of sperm surface protein DCST2. This chain is Sperm acrosome membrane-associated protein 6, found in Danio rerio (Zebrafish).